The following is a 129-amino-acid chain: MSILKEFREFAVKGNVVDMAVGVIIGGAFGKIVSSLVSDVVMPPIGWLIGGVDFKDLAIEIAPAKEGAEAVMLKYGAFIQNVFDFLIIAIAVFGMVKVINKIKKPAEAAPAEPTAEEKLLTEIRDLLKK.

Helical transmembrane passes span 10 to 30 (FAVK…GAFG) and 76 to 96 (GAFI…FGMV).

Belongs to the MscL family. As to quaternary structure, homopentamer.

The protein resides in the cell inner membrane. Its function is as follows. Channel that opens in response to stretch forces in the membrane lipid bilayer. May participate in the regulation of osmotic pressure changes within the cell. This Actinobacillus pleuropneumoniae serotype 5b (strain L20) protein is Large-conductance mechanosensitive channel.